A 619-amino-acid chain; its full sequence is Protein Atg16l2 (619 aa).

The disordered stretch occupies residues 57 to 78 (LQPEPNSVTPTTHQGPWEESEL). Residues 60–70 (EPNSVTPTTHQ) show a composition bias toward polar residues. The stretch at 116–227 (AALGTLESEL…QARVSQELKK (112 aa)) forms a coiled coil. WD repeat units follow at residues 334-373 (AHLS…LEAN), 378-417 (GAGG…SKET), 420-454 (GHKD…LGRA), 455-498 (YCSR…CTQV), 500-539 (PVQG…IRQV), 546-585 (KCGS…LESR), and 589-619 (PHCA…VLWQ).

The protein belongs to the WD repeat ATG16 family. As to quaternary structure, homooligomer. Heterooligomer with ATG16L1. Interacts with ATG5. Self-oligomerizes to form a 800-kDa complex composed of ATG12-ATG5 and ATG16L2. Interacts with RAB33B.

It is found in the cytoplasm. The protein resides in the cytosol. In terms of biological role, may play a role in regulating epithelial homeostasis in an ATG16L1-dependent manner. The chain is Protein Atg16l2 (ATG16L2) from Homo sapiens (Human).